We begin with the raw amino-acid sequence, 490 residues long: Betaine aldehyde dehydrogenase (490 aa).

K(+) contacts are provided by Thr-26, Ile-27, and Asp-93. 150–152 (GAW) lines the NAD(+) pocket. Lys-162 functions as the Charge relay system in the catalytic mechanism. 176-179 (KPSE) serves as a coordination point for NAD(+). Val-180 serves as a coordination point for K(+). 230 to 233 (GVAS) contacts NAD(+). Residue Leu-246 participates in K(+) binding. Glu-252 serves as the catalytic Proton acceptor. NAD(+) is bound by residues Gly-254, Cys-286, and Glu-387. Cys-286 functions as the Nucleophile in the catalytic mechanism. Position 286 is a cysteine sulfenic acid (-SOH) (Cys-286). Positions 457 and 460 each coordinate K(+). Glu-464 functions as the Charge relay system in the catalytic mechanism.

This sequence belongs to the aldehyde dehydrogenase family. Dimer of dimers. K(+) serves as cofactor.

It catalyses the reaction betaine aldehyde + NAD(+) + H2O = glycine betaine + NADH + 2 H(+). Its pathway is amine and polyamine biosynthesis; betaine biosynthesis via choline pathway; betaine from betaine aldehyde: step 1/1. In terms of biological role, involved in the biosynthesis of the osmoprotectant glycine betaine. Catalyzes the irreversible oxidation of betaine aldehyde to the corresponding acid. This is Betaine aldehyde dehydrogenase from Escherichia coli O157:H7.